A 291-amino-acid chain; its full sequence is Transmembrane protein 41B (291 aa).

The interval 1 to 38 (MAKGRVAERSQMGADHTTPVGDGAAGTRGPAAPGSRDY) is disordered. The residue at position 18 (Thr-18) is a Phosphothreonine. Low complexity predominate over residues 21–34 (GDGAAGTRGPAAPG). A Phosphoserine modification is found at Ser-35. A run of 6 helical transmembrane segments spans residues 52-72 (MSLL…FLVY), 109-129 (FYVQ…TFAI), 147-169 (LALF…LSYL), 197-217 (LINY…FINI), 225-245 (PLKV…FVAI), and 262-282 (SWNS…PAIF). Residues 140–251 (GFLYPFPLAL…FVAIKAGTTL (112 aa)) form a VTT domain; required for its function in autophagy region.

It belongs to the TMEM41 family. In terms of assembly, interacts with VMP1. Interacts with COPA, COPB1, VDAC1 and ERLIN2. Interacts with ATG2A. Interacts with SURF4.

The protein resides in the endoplasmic reticulum membrane. It is found in the endomembrane system. The enzyme catalyses a 1,2-diacyl-sn-glycero-3-phospho-L-serine(in) = a 1,2-diacyl-sn-glycero-3-phospho-L-serine(out). It catalyses the reaction cholesterol(in) = cholesterol(out). The catalysed reaction is a 1,2-diacyl-sn-glycero-3-phosphocholine(in) = a 1,2-diacyl-sn-glycero-3-phosphocholine(out). It carries out the reaction a 1,2-diacyl-sn-glycero-3-phosphoethanolamine(in) = a 1,2-diacyl-sn-glycero-3-phosphoethanolamine(out). Its function is as follows. Phospholipid scramblase involved in lipid homeostasis and membrane dynamics processes. Has phospholipid scramblase activity toward cholesterol and phosphatidylserine, as well as phosphatidylethanolamine and phosphatidylcholine. Required for autophagosome formation: participates in early stages of autophagosome biogenesis at the endoplasmic reticulum (ER) membrane by reequilibrating the leaflets of the ER as lipids are extracted by ATG2 (ATG2A or ATG2B) to mediate autophagosome assembly. In addition to autophagy, involved in other processes in which phospholipid scramblase activity is required. Required for normal motor neuron development. This is Transmembrane protein 41B from Pongo abelii (Sumatran orangutan).